Consider the following 196-residue polypeptide: ECF RNA polymerase sigma factor SigK (196 aa).

The segment at 39–105 is sigma-70 factor domain-2; sequence YDQTRARVYG…RAVDRVRSEQ (67 aa). Positions 62-65 match the Polymerase core binding motif; the sequence is ETTQ. A sigma-70 factor domain-4 region spans residues 142–191; the sequence is CLDSLTDVQRECIQLAYYDGLTYAQVADRLAANLATIKSRMRDGIRALRK. The H-T-H motif DNA-binding region spans 164 to 183; the sequence is YAQVADRLAANLATIKSRMR.

The protein belongs to the sigma-70 factor family. ECF subfamily. Interacts transiently with the RNA polymerase catalytic core formed by RpoA, RpoB, RpoC and RpoZ (2 alpha, 1 beta, 1 beta' and 1 omega subunit) to form the RNA polymerase holoenzyme that can initiate transcription. Interacts (via sigma-70 factor domain 4) with anti-sigma-K factor RskA.

Functionally, sigma factors are initiation factors that promote the attachment of RNA polymerase to specific initiation sites and are then released. Extracytoplasmic function (ECF) sigma factors are held in an inactive form by an anti-sigma factor until released by regulated intramembrane proteolysis. This Mycolicibacterium vanbaalenii (strain DSM 7251 / JCM 13017 / BCRC 16820 / KCTC 9966 / NRRL B-24157 / PYR-1) (Mycobacterium vanbaalenii) protein is ECF RNA polymerase sigma factor SigK (sigK).